A 371-amino-acid polypeptide reads, in one-letter code: AA9 family lytic polysaccharide monooxygenase B (371 aa).

The first 25 residues, 1-25, serve as a signal peptide directing secretion; sequence MSIAKIAGVVLGSAALVAGHGYVSG. Cu(2+)-binding residues include histidine 20 and histidine 104. Cystine bridges form between cysteine 74/cysteine 194 and cysteine 115/cysteine 119. Residue asparagine 154 is glycosylated (N-linked (GlcNAc...) asparagine). 2 residues coordinate O2: histidine 180 and glutamine 189. Residue tyrosine 191 coordinates Cu(2+). Residues 304–332 are disordered; that stretch reads HVQATSSSAAASTPTASSGASSGSGSSSS. Over residues 307 to 332 the composition is skewed to low complexity; it reads ATSSSAAASTPTASSGASSGSGSSSS.

Belongs to the polysaccharide monooxygenase AA9 family. Cu(2+) is required as a cofactor.

It localises to the secreted. The enzyme catalyses [(1-&gt;4)-beta-D-glucosyl]n+m + reduced acceptor + O2 = 4-dehydro-beta-D-glucosyl-[(1-&gt;4)-beta-D-glucosyl]n-1 + [(1-&gt;4)-beta-D-glucosyl]m + acceptor + H2O.. Its function is as follows. Lytic polysaccharide monooxygenase (LPMO) that depolymerizes crystalline and amorphous polysaccharides via the oxidation of scissile alpha- or beta-(1-4)-glycosidic bonds, yielding C1 and C4 oxidation products. Catalysis by LPMOs requires the reduction of the active-site copper from Cu(II) to Cu(I) by a reducing agent and H(2)O(2) or O(2) as a cosubstrate. In addition to cellulose, also cleaves the beta-(1!4)-glucan backbone of tamarind xyloglucan, irrespective of substitutions which contrasts with AA9A xyloglucan cleavage activity. The protein is AA9 family lytic polysaccharide monooxygenase B of Aspergillus tamarii.